Here is a 198-residue protein sequence, read N- to C-terminus: Coagulation factor XIII A chain (198 aa).

A disordered region spans residues 1–36 (MSESSGTAFGGRRAIPPNTSNAAENDPPTVELQGLV). N-acetylserine is present on S2. Positions 2-38 (SESSGTAFGGRRAIPPNTSNAAENDPPTVELQGLVPR) are cleaved as a propeptide — activation peptide.

Belongs to the transglutaminase superfamily. Transglutaminase family. Tetramer of two A chains (F13A1) and two B (F13B) chains. Requires Ca(2+) as cofactor. The activation peptide is released by thrombin.

Its subcellular location is the cytoplasm. It is found in the secreted. It carries out the reaction L-glutaminyl-[protein] + L-lysyl-[protein] = [protein]-L-lysyl-N(6)-5-L-glutamyl-[protein] + NH4(+). Functionally, factor XIII is activated by thrombin and calcium ion to a transglutaminase that catalyzes the formation of gamma-glutamyl-epsilon-lysine cross-links between fibrin chains, thus stabilizing the fibrin clot. Also cross-link alpha-2-plasmin inhibitor, or fibronectin, to the alpha chains of fibrin. The sequence is that of Coagulation factor XIII A chain (F13A1) from Bos taurus (Bovine).